A 122-amino-acid polypeptide reads, in one-letter code: Large ribosomal subunit protein uL14c (122 aa).

It belongs to the universal ribosomal protein uL14 family. As to quaternary structure, part of the 50S ribosomal subunit.

The protein localises to the plastid. The protein resides in the chloroplast. In terms of biological role, binds to 23S rRNA. This chain is Large ribosomal subunit protein uL14c, found in Citrus sinensis (Sweet orange).